The following is an 88-amino-acid chain: Alpha-latrotoxin associated low molecular weight protein 2 (88 aa).

An N-terminal signal peptide occupies residues methionine 1 to glycine 19. 3 cysteine pairs are disulfide-bonded: cysteine 30–cysteine 66, cysteine 46–cysteine 62, and cysteine 49–cysteine 75.

This sequence belongs to the arthropod CHH/MIH/GIH/VIH hormone family. As to expression, expressed by the venom gland.

Its subcellular location is the secreted. Functionally, may increase the toxicity of alpha-latrotoxin and/or other venom components. Is non-toxic to mice and to the cockroach Periplaneta americana. This is Alpha-latrotoxin associated low molecular weight protein 2 from Latrodectus hesperus (Western black widow spider).